The chain runs to 236 residues: CD81 antigen (236 aa).

The Cytoplasmic segment spans residues 1-12 (MGVEGCTKCIKY). A helical transmembrane segment spans residues 13-33 (LLFVFNFVFWLAGGVILGVAL). Residues 34–63 (WLRHDPQTTTLLYLELGDKPAPSTFYVGIY) are Extracellular-facing. The chain crosses the membrane as a helical span at residues 64-84 (ILIAVGAVMMFVGFLGCYGAI). Over 85–89 (QESQC) the chain is Cytoplasmic. A helical transmembrane segment spans residues 90–112 (LLGTFFTCLVILFACEVAAGIWG). Residues 113–201 (FVNKDQIAKD…QKIDELFSGK (89 aa)) lie on the Extracellular side of the membrane. 2 disulfides stabilise this stretch: cysteine 156–cysteine 190 and cysteine 157–cysteine 175. A helical transmembrane segment spans residues 202 to 224 (LYLIGIAAIVVAVIMIFEMILSM). Glutamate 219 provides a ligand contact to cholesterol. Residues 225–236 (VLCCGIRNSSVY) are Cytoplasmic-facing.

This sequence belongs to the tetraspanin (TM4SF) family. As to quaternary structure, homodimer. Part of a complex composed of CD19, CR2/CD21, CD81 and IFITM1/CD225 in the membrane of mature B cells. Interacts (via the second extracellular domain) with CD19; this interaction is initiated early during biosynthesis in the ER and enables trafficking of only properly folded CD19. Part of a complex that includes MHC class II/HLA-DR molecules and IFITM1. Interacts with IFITM1. Interacts with IFITM2 and IFITM3. Part of integrin-tetraspanin complex composed of CD9, CD81, beta-1 and beta-2 integrins in the membrane of monocyte/macrophages. Interacts (via the second extracellular domain) with integrin ITGAV:ITGB3. Interacts with CD247/CD3 zeta, ICAM1 and CD9 at the immune synapse on T cell membrane. Part of a GPCR-tetraspanin complex consisting at least of ADGRG1, CD81, possibly CD9, and GNA11 in which CD81 enhances the association of ADGRG1 with GNA11. Part of a complex composed of CD9, CD81, PTGFRN and IGSF8. Interacts directly with IGSF8. Interacts with CD53 and SCIMP. Interacts with SAMHD1 (via its C-terminus). Interacts with glypican GPC3 and with the transcriptional repressor HHEX; binding to GPC3 decreases the availability of free CD81 for binding to HHEX, resulting in nuclear translocation of HHEX and transcriptional repression. Interacts with CLDN1. Interacts with CLDN6 and CLDN9. Not glycosylated. In terms of processing, likely constitutively palmitoylated at low levels. Protein palmitoylation is up-regulated upon coligation of BCR and CD9-C2R-CD81 complexes in lipid rafts.

The protein localises to the cell membrane. It localises to the basolateral cell membrane. In terms of biological role, structural component of specialized membrane microdomains known as tetraspanin-enriched microdomains (TERMs), which act as platforms for receptor clustering and signaling. Essential for trafficking and compartmentalization of CD19 receptor on the surface of activated B cells. Upon initial encounter with microbial pathogens, enables the assembly of CD19-CR2/CD21 and B cell receptor (BCR) complexes at signaling TERMs, lowering the threshold dose of antigen required to trigger B cell clonal expansion and antibody production. In T cells, facilitates the localization of CD247/CD3 zeta at antigen-induced synapses with B cells, providing for costimulation and polarization toward T helper type 2 phenotype. Present in MHC class II compartments, may also play a role in antigen presentation. Can act both as positive and negative regulator of homotypic or heterotypic cell-cell fusion processes. Positively regulates sperm-egg fusion and may be involved in acrosome reaction. In myoblasts, associates with CD9 and PTGFRN and inhibits myotube fusion during muscle regeneration. In macrophages, associates with CD9 and beta-1 and beta-2 integrins, and prevents macrophage fusion into multinucleated giant cells specialized in ingesting complement-opsonized large particles. Also prevents the fusion of mononuclear cell progenitors into osteoclasts in charge of bone resorption. May regulate the compartmentalization of enzymatic activities. In T cells, defines the subcellular localization of dNTPase SAMHD1 and permits its degradation by the proteasome, thereby controlling intracellular dNTP levels. Also involved in cell adhesion and motility. Positively regulates integrin-mediated adhesion of macrophages, particularly relevant for the inflammatory response in the lung. In Rattus norvegicus (Rat), this protein is CD81 antigen (Cd81).